Reading from the N-terminus, the 218-residue chain is MGQKVNPIGLRIGIIRDWESRWYAEKDYADLLHEDLKIREYISKRLQDAAVSRVEIERAANRVNVTIHTAKPGMVIGKGGSEVEALRKALAQLTGKRVHINIVEIKKPDLDARLVAENIARQLENRVSFRRAQKQAIQRAMRAGAKGIKTMVSGRLGGADIARSEHYSEGTVPLHTLRADIDYGTAEADTTYGKIGVKVWIYRGEVLPTKKKAEEGGK.

A KH type-2 domain is found at 38 to 106 (IREYISKRLQ…RVHINIVEIK (69 aa)).

The protein belongs to the universal ribosomal protein uS3 family. In terms of assembly, part of the 30S ribosomal subunit. Forms a tight complex with proteins S10 and S14.

Functionally, binds the lower part of the 30S subunit head. Binds mRNA in the 70S ribosome, positioning it for translation. The chain is Small ribosomal subunit protein uS3 from Geobacillus kaustophilus (strain HTA426).